A 173-amino-acid chain; its full sequence is Myosin light chain 5 (173 aa).

Residues 1-20 (MASRKTKKKEGGALRAQRAS) form a disordered region. 3 consecutive EF-hand domains span residues 30–65 (TQIQEFKEAFTLMDQNRDGFIDKEDLKDTYASLGKT), 100–135 (DAEETILNAFKMLDPDGKGKINKEYIKRLLMSQADK), and 136–171 (MTAEEVDQMFQFASIDVAGNLDYKALSYVITHGEEK). Residues Asp-43, Asn-45, Asp-47, and Asp-54 each contribute to the Ca(2+) site.

In terms of assembly, myosin is a hexamer of 2 heavy chains and 4 light chains. In terms of tissue distribution, expressed in fetal skeletal muscle and retina.

The protein is Myosin light chain 5 (MYL5) of Homo sapiens (Human).